The primary structure comprises 303 residues: Aquaporin-7 (303 aa).

Over 1-21 the chain is Cytoplasmic; that stretch reads MAPRSVLETIQSVLQKNMVRE. Ser5 carries the post-translational modification Phosphoserine. Residues 22–39 traverse the membrane as a helical segment; sequence FLAEFLSTYVMMVFGLGS. Residues 40–52 are Extracellular-facing; the sequence is VAHMVLGENSGSY. Residues 53–70 form a helical membrane-spanning segment; that stretch reads LGVNLGFGFGVTMGVHVA. The Cytoplasmic segment spans residues 71-74; the sequence is GGIS. The segment at residues 75–88 is an intramembrane region (discontinuously helical); that stretch reads GAHMNAAVTFTNCA. The short motif at 79-81 is the NPA 1 element; that stretch reads NAA. At 89 to 96 the chain is on the cytoplasmic side; sequence LGRMTWKK. A helical transmembrane segment spans residues 97 to 117; that stretch reads FPVYVLGQFLGSFSAAATTYL. Topologically, residues 118–152 are extracellular; it reads IFYGAINHFAGGDLLVTGSKATANIFATYLPEYMT. Residues 153-173 traverse the membrane as a helical segment; that stretch reads LWRGFLDEAFVTGMLQLCLFA. At 174-185 the chain is on the cytoplasmic side; it reads ITDKKNSPALQG. A helical membrane pass occupies residues 186-202; it reads TEPLVIGILVTVLGVSL. The Extracellular portion of the chain corresponds to 203-206; it reads GMNS. An intramembrane region (discontinuously helical) is located at residues 207–220; that stretch reads GYAINPSRDLPPRL. Residues 211-213 carry the NPA 2 motif; that stretch reads NPS. Over 221-238 the chain is Extracellular; the sequence is FTFIAGWGKQVFRAGNNW. Residues 239–260 traverse the membrane as a helical segment; that stretch reads WWVPVVAPLLGAYLGGIVYLGL. Over 261–303 the chain is Cytoplasmic; the sequence is IHPSIPQDPQRLENFTARDQKVTASYKNAASANISGSVPLEHF.

Belongs to the MIP/aquaporin (TC 1.A.8) family. In terms of assembly, homotetramer; each monomer provides an independent glycerol/water pore. Two homotetramers on opposing membranes can dimerize, forming a cell-cell junction. Interacts with PLIN1. In terms of processing, phosphorylation by PKA could prevent the interaction with PLIN1. Detected in proximal tubules in kidney. Detected in the capillary network between muscle fibers in skeletal muscle and heart, and in spermatids and on spermatozoa tails in testis and epididymis. Detected in white and brown adipose tissue, especially on small blood vessels (at protein level). Detected in kidney and white adipose tissue.

The protein resides in the cell membrane. It localises to the cytoplasmic vesicle membrane. It is found in the lipid droplet. The catalysed reaction is glycerol(in) = glycerol(out). It catalyses the reaction H2O(in) = H2O(out). It carries out the reaction urea(in) = urea(out). With respect to regulation, glycerol transport is regulated by pH, with the porin being permeable to glycerol at pH 7.4 but not at pH 5.5. Water permeability, however, is not influenced by pH. Its function is as follows. Aquaglyceroporins form homotetrameric transmembrane channels, with each monomer independently mediating glycerol and water transport across the plasma membrane along their osmotic gradient. Could also be permeable to urea. Mediates the efflux of glycerol, formed upon triglyceride hydrolysis, to avoid its accumulation in adipocytes and to make it available to other tissues. In the kidney, mediates the reabsorption of glycerol, preventing its loss in urine, again participating to energy homeostasis. In pancreatic beta cells, it also mediates the efflux of glycerol, regulating its intracellular levels. This Mus musculus (Mouse) protein is Aquaporin-7.